The sequence spans 705 residues: Solute carrier family 12 member 8 (705 aa).

A run of 11 helical transmembrane segments spans residues 38 to 58 (FGTWDGVFTSCMINIFGVVLF), 69 to 89 (GVLLGLLLVSFVVLVALITVL), 92 to 112 (IGVAEHGGISSGGVYSMISSV), 121 to 141 (VGLLYVFGQCVAGAMYITGFA), 159 to 179 (ISVAVLLALLGINLAGVKWII), 181 to 201 (LQLLLLLLLAVSTLDFVVGSF), 232 to 252 (FFTVFGVFFPAATGVMAGFNM), 268 to 288 (LAAVGVSWFLYIIFAFLLGAV), 306 to 326 (LVGFLFLLGLYISSLASCMGG), 368 to 388 (LVTMAFVLVGQVNVLAPVVTI), and 390 to 410 (FMLTYIMVDYSYFALSMAHCG). The segment at 472–512 (ESRQLGSREGNNPKNQKRKGKKGAKQTLQDSFLLDPGSPLS) is disordered. The span at 486-495 (NQKRKGKKGA) shows a compositional bias: basic residues. 2 helical membrane passes run 587-607 (WVSLLGALASLLIMFVIQWLY) and 612-632 (MGVAALVYFYIGQASPGLYLG).

Belongs to the SLC12A transporter family.

It is found in the membrane. In terms of biological role, cation/chloride cotransporter that may play a role in the control of keratinocyte proliferation. This Mus musculus (Mouse) protein is Solute carrier family 12 member 8 (Slc12a8).